A 266-amino-acid chain; its full sequence is Protein-ADP-ribose hydrolase (266 aa).

The Macro domain maps to 74-265 (TDLKDLKPIK…LYKEAFNRDA (192 aa)). ADP-D-ribose is bound by residues Asp93, Ile94, and Asn107. Cys113, His118, and Cys120 together coordinate Zn(2+). Cys120, Ile121, Asp122, Ser212, Thr213, Gly214, and Phe216 together coordinate ADP-D-ribose.

It belongs to the MacroD-type family. Zn-Macro subfamily. Zn(2+) serves as cofactor.

The enzyme catalyses 4-O-(ADP-D-ribosyl)-L-aspartyl-[protein] + H2O = L-aspartyl-[protein] + ADP-D-ribose + H(+). ADP-ribosylhydrolase that specifically reverses the SirTM-mediated mono-ADP-ribosylation at an asparatate residue of GcvH-L, by releasing ADP-ribose from the target protein. May play a role in the regulation of the response to host-induced oxidative stress. The polypeptide is Protein-ADP-ribose hydrolase (Staphylococcus aureus (strain COL)).